The following is a 978-amino-acid chain: Mineralocorticoid receptor (978 aa).

The tract at residues 1-602 (METKGYHSLP…STGSSRPSKI (602 aa)) is modulating. Positions 234–243 (SLTCSPSVEN) are enriched in polar residues. Disordered stretches follow at residues 234 to 331 (SLTC…STVG) and 353 to 372 (GAIQ…AHDV). 5 positions are modified to phosphoserine: S250, S259, S283, S287, and S299. The segment covering 259–300 (SPLSSPLSSMKSPISSPPSHCSVKSPVSSPNNVPLRSSVSSP) has biased composition (low complexity). Residues 301–331 (ANLNNSRCSVSSPSNTNNRSTLSSPTASTVG) are compositionally biased toward polar residues. Residues C603, C606, C620, C623, C637, C643, C653, and C656 each coordinate Zn(2+). 2 consecutive NR C4-type zinc fingers follow at residues 603–623 (CLVC…CGSC) and 637–661 (CAGR…LQKC). The segment at residues 603–666 (CLVCGDEASG…RLQKCLQAGM (64 aa)) is a DNA-binding region (nuclear receptor). The interval 667 to 719 (NLGARKSKKLGKLKGLHEEQPQQPPPPPPQSPEEGTTYIAPTKEPSVNSALVP) is hinge. Residues 681–706 (GLHEEQPQQPPPPPPQSPEEGTTYIA) form a disordered region. Pro residues predominate over residues 688-697 (QQPPPPPPQS). The region spanning 720–958 (QLASITRALT…EFPAMLVEII (239 aa)) is the NR LBD domain. Positions 764 and 770 each coordinate 21-hydroxyprogesterone. Positions 764 and 770 each coordinate aldosterone. Progesterone-binding residues include N764 and Q770. Positions 776-779 (KWAK) are important for coactivator binding. Residues R811 and T939 each coordinate 21-hydroxyprogesterone. 2 residues coordinate aldosterone: R811 and T939. Residues R811 and T939 each contribute to the progesterone site.

This sequence belongs to the nuclear hormone receptor family. NR3 subfamily. As to quaternary structure, heteromultimeric cytoplasmic complex with HSP90, HSP70, and FKBP4, in the absence of ligand. After ligand binding, it translocates to the nucleus and binds to DNA as a homodimer and as a heterodimer with NR3C1. Binds the coactivator NCOA2. May interact with HSD11B2 in the absence of ligand. Binds the coactivators NCOA1, TIF1 and NRIP1. Phosphorylated. As to expression, expressed in heart and kidney.

The protein resides in the cytoplasm. Its subcellular location is the nucleus. The protein localises to the endoplasmic reticulum membrane. Its function is as follows. Receptor for both mineralocorticoids (MC) such as aldosterone and glucocorticoids (GC) such as corticosterone or cortisol. Binds to mineralocorticoid response elements (MRE) and transactivates target genes. The effect of MC is to increase ion and water transport and thus raise extracellular fluid volume and blood pressure and lower potassium levels. The sequence is that of Mineralocorticoid receptor (Nr3c2) from Mus musculus (Mouse).